We begin with the raw amino-acid sequence, 265 residues long: Capsule polysaccharide export inner-membrane protein BexB (265 aa).

6 helical membrane passes run Ile37–Trp57, Lys64–Trp84, Val121–Ile141, Phe148–Ile168, Phe178–Phe198, and Glu235–Val255. The ABC transmembrane type-2 domain occupies Ile37–Phe258.

Belongs to the ABC-2 integral membrane protein family.

Its subcellular location is the cell inner membrane. May form an ATP-driven capsule polysaccharide export apparatus, in association with the BexA, BexC and BexD proteins. The protein is Capsule polysaccharide export inner-membrane protein BexB (bexB) of Haemophilus influenzae.